Here is a 120-residue protein sequence, read N- to C-terminus: ATP-dependent Clp protease adapter protein ClpS (120 aa).

This sequence belongs to the ClpS family. In terms of assembly, binds to the N-terminal domain of the chaperone ClpA.

Functionally, involved in the modulation of the specificity of the ClpAP-mediated ATP-dependent protein degradation. This Pseudomonas syringae pv. syringae (strain B728a) protein is ATP-dependent Clp protease adapter protein ClpS.